Consider the following 634-residue polypeptide: 1-deoxy-D-xylulose-5-phosphate synthase (634 aa).

Thiamine diphosphate-binding positions include H74 and 115-117 (AHS). Residue D146 participates in Mg(2+) binding. Thiamine diphosphate-binding positions include 147-148 (GA), N176, Y283, and E365. N176 contacts Mg(2+).

It belongs to the transketolase family. DXPS subfamily. As to quaternary structure, homodimer. The cofactor is Mg(2+). It depends on thiamine diphosphate as a cofactor.

The catalysed reaction is D-glyceraldehyde 3-phosphate + pyruvate + H(+) = 1-deoxy-D-xylulose 5-phosphate + CO2. It participates in metabolic intermediate biosynthesis; 1-deoxy-D-xylulose 5-phosphate biosynthesis; 1-deoxy-D-xylulose 5-phosphate from D-glyceraldehyde 3-phosphate and pyruvate: step 1/1. Catalyzes the acyloin condensation reaction between C atoms 2 and 3 of pyruvate and glyceraldehyde 3-phosphate to yield 1-deoxy-D-xylulose-5-phosphate (DXP). The sequence is that of 1-deoxy-D-xylulose-5-phosphate synthase from Burkholderia ambifaria (strain MC40-6).